Reading from the N-terminus, the 293-residue chain is Dioxygenase cdmA (293 aa).

Fe cation-binding residues include histidine 135, aspartate 137, and histidine 212.

It belongs to the PhyH family. As to quaternary structure, homodimer. Fe cation is required as a cofactor.

The enzyme catalyses chrodrimanin C + 2-oxoglutarate + O2 = verruculide A + succinate + CO2 + H2O. It carries out the reaction chrodrimanin H + 2-oxoglutarate + O2 = chrodrimanin E + succinate + CO2 + H2O. The protein operates within secondary metabolite biosynthesis; terpenoid biosynthesis. In terms of biological role, dioxygenase; part of the gene cluster that mediates the biosynthesis of chrodrimanin B, a meroterpenoid that acts as a potent blocker of insect GABA-gated chloride channels. The first step of the pathway is the biosynthesis of 6-hydroxymellein by the polyketide synthase cdmE. The prenyltransferase cdmH acts as a 6-hydroxymellein 5-farnesyltransferase and produces the hydrophobic metabolite verruculide C. The FAD-dependent monooxygenase cdmI further converts verruculide C into verruculide B. The terpene cyclase cdmG then produced the pentacyclic molecule 3-hydroxypentacecilide A, the backbone structure of chrodrimanin B, via folding the farnesyl moiety of the substrate into the chair-boat conformation. The short-chain dehydrogenase/reductase cdmF functions as the 3-OH dehydrogenase that oxidizes the C-3 hydroxyl group of 3-hydroxypentacecilide A and produces chrodrimanin C, the dehydrogenated product of 3-hydroxypentacecilide A. The cytochrome P450 monooxygenase cdmJ then accepts both 3-hydroxypentacecilide A and chrodrimanin C and functions as a C-7-beta-hydroxylase to produce respectively chrodrimanin H and chrodrimanin F. The dioxygenase cdmA accepts chrodrimanin H to afford chrodrimanin E, which is further transformed to chrodrimanin A by the dioxygenase cdmD. CdmA can also accept chrodrimanin C as substrate to convert it into verruculide A, which is further converted into chrodrimanin T by cdmD. The last step of the biosynthesis is proposed to be performed by the acetyltransferase cdmC which acetylates chrodrimanin A to yield chrodrimanin B. The pathway may also lead to the production of additional shunt products, including chrodrimanins T and U. The polypeptide is Dioxygenase cdmA (Talaromyces verruculosus (Penicillium verruculosum)).